The sequence spans 638 residues: Threonine--tRNA ligase (638 aa).

The TGS domain maps to 1 to 61; the sequence is MPKITLPDGT…KNDSKVVIIT (61 aa). The interval 242–533 is catalytic; the sequence is DHRKLGKKHS…LIEQYEAKFP (292 aa). Cysteine 333, histidine 384, and histidine 510 together coordinate Zn(2+).

It belongs to the class-II aminoacyl-tRNA synthetase family. As to quaternary structure, homodimer. The cofactor is Zn(2+).

The protein resides in the cytoplasm. It catalyses the reaction tRNA(Thr) + L-threonine + ATP = L-threonyl-tRNA(Thr) + AMP + diphosphate + H(+). Catalyzes the attachment of threonine to tRNA(Thr) in a two-step reaction: L-threonine is first activated by ATP to form Thr-AMP and then transferred to the acceptor end of tRNA(Thr). Also edits incorrectly charged L-seryl-tRNA(Thr). The polypeptide is Threonine--tRNA ligase (Prochlorococcus marinus (strain MIT 9515)).